The primary structure comprises 298 residues: Palmitoyl-protein thioesterase 1 (298 aa).

Residues Met-1–Ala-16 form the signal peptide. An N-linked (GlcNAc...) asparagine glycan is attached at Asn-20. 3 disulfide bridges follow: Cys-37-Cys-38, Cys-88-Cys-120, and Cys-144-Cys-151. Catalysis depends on Ser-107, which acts as the Nucleophile. Asp-224 is a catalytic residue. Asn-250 carries N-linked (GlcNAc...) asparagine glycosylation. His-280 is a catalytic residue.

Belongs to the palmitoyl-protein thioesterase family.

It catalyses the reaction S-hexadecanoyl-L-cysteinyl-[protein] + H2O = L-cysteinyl-[protein] + hexadecanoate + H(+). Functionally, removes thioester-linked fatty acyl groups such as palmitate (hexadecanoate) from modified cysteine residues in proteins or peptides. The polypeptide is Palmitoyl-protein thioesterase 1 (ppt-1) (Caenorhabditis elegans).